The sequence spans 253 residues: DNA repair protein RecO (253 aa).

This sequence belongs to the RecO family.

Functionally, involved in DNA repair and RecF pathway recombination. The polypeptide is DNA repair protein RecO (Dehalococcoides mccartyi (strain CBDB1)).